A 402-amino-acid chain; its full sequence is Beta-peptidyl aminopeptidase BapA (402 aa).

Residues 1–29 form the signal peptide; it reads MTSTQRLWSGALPLLTALIVSIAATASLA. The Nucleophile role is filled by Ser-279. Active-site proton donor/acceptor residues include Ser-317 and Glu-319.

The protein belongs to the peptidase S58 family. Heterooctamer of 4 heterodimers ((alpha:beta)4); each heterodimer is composed of an alpha subunit and a beta subunit processed from the same precursor. Autoproteolytic processing to generate the alpha and beta subunit is required for self-activation and is proposed to use a similar mechanism as substrate cleavage.

Its subcellular location is the periplasm. It catalyses the reaction Cleaves N-terminal beta-homoamino acids from peptides composed of 2 to 6 amino acids.. Inhibited by AEBSF (4-(2-aminoethyl)benzenesulfonyl fluoride, Pefabloc SC), ampicillin and AMP(hyd) (ampillicin-derived penicilloic acid). Its function is as follows. Beta-aminopeptidase that can cleave synthetic beta-peptides which consist of backbone-elongated beta-amino acid residues that are not processed by common proteolytic enzymes. Can cleave the beta-peptides beta-homoVal-beta-homoAla-beta-homoLeu and beta-homoAla-beta-homoLeu. Requires a beta-amino acid at the N-terminus of peptide substrates and cleaves the peptide bond between the N-terminal beta-amino acid and the amino acid at the second position of tripeptidic substrates of the general structure H-betahXaa-Ile-betahTyr-OH according to the following preferences with regard to the side chain of the N-terminal beta-amino acid: aliphatic and aromatic &gt; OH-containing &gt; hydrogen, basic and polar. This Sphingosinicella xenopeptidilytica protein is Beta-peptidyl aminopeptidase BapA.